The primary structure comprises 389 residues: Mannuronan synthase (389 aa).

Positions 16–116 (QRQFARVKLP…EVAALRYLIT (101 aa)) constitute a PilZ domain.

This sequence belongs to the Alg44 family.

It is found in the periplasm. The enzyme catalyses [(1-&gt;4)-beta-D-mannuronosyl](n) + GDP-alpha-D-mannuronate = [(1-&gt;4)-beta-D-mannuronosyl](n+1) + GDP + H(+). The protein operates within glycan biosynthesis; alginate biosynthesis. Its function is as follows. Required for alginate biosynthesis. This is Mannuronan synthase (alg44) from Pseudomonas aeruginosa (strain ATCC 15692 / DSM 22644 / CIP 104116 / JCM 14847 / LMG 12228 / 1C / PRS 101 / PAO1).